The following is a 246-amino-acid chain: Proteasome subunit alpha (246 aa).

It belongs to the peptidase T1A family. In terms of assembly, the 20S proteasome core is composed of 14 alpha and 14 beta subunits that assemble into four stacked heptameric rings, resulting in a barrel-shaped structure. The two inner rings, each composed of seven catalytic beta subunits, are sandwiched by two outer rings, each composed of seven alpha subunits. The catalytic chamber with the active sites is on the inside of the barrel. Has probably a gated structure, the ends of the cylinder being occluded by the N-termini of the alpha-subunits. Is likely capped at one or both ends by the proteasome regulatory ATPase, PAN.

Its subcellular location is the cytoplasm. The formation of the proteasomal ATPase PAN-20S proteasome complex, via the docking of the C-termini of PAN into the intersubunit pockets in the alpha-rings, triggers opening of the gate for substrate entry. Interconversion between the open-gate and close-gate conformations leads to a dynamic regulation of the 20S proteasome proteolysis activity. Functionally, component of the proteasome core, a large protease complex with broad specificity involved in protein degradation. The polypeptide is Proteasome subunit alpha (Archaeoglobus fulgidus (strain ATCC 49558 / DSM 4304 / JCM 9628 / NBRC 100126 / VC-16)).